The sequence spans 345 residues: UDP-N-acetylenolpyruvoylglucosamine reductase (345 aa).

One can recognise an FAD-binding PCMH-type domain in the interval 27 to 197 (FDASAELAYE…TKVVFKLPKQ (171 aa)). Residue arginine 174 is part of the active site. The active-site Proton donor is the serine 245. Glutamate 341 is a catalytic residue.

Belongs to the MurB family. Requires FAD as cofactor.

It localises to the cytoplasm. The catalysed reaction is UDP-N-acetyl-alpha-D-muramate + NADP(+) = UDP-N-acetyl-3-O-(1-carboxyvinyl)-alpha-D-glucosamine + NADPH + H(+). Its pathway is cell wall biogenesis; peptidoglycan biosynthesis. Cell wall formation. The sequence is that of UDP-N-acetylenolpyruvoylglucosamine reductase from Polynucleobacter asymbioticus (strain DSM 18221 / CIP 109841 / QLW-P1DMWA-1) (Polynucleobacter necessarius subsp. asymbioticus).